The following is a 279-amino-acid chain: Prepilin leader peptidase/N-methyltransferase (279 aa).

Topologically, residues M1–F16 are periplasmic. The helical transmembrane segment at G17–Y35 threads the bilayer. Over R36–S104 the chain is Cytoplasmic. The helical transmembrane segment at V105 to L123 threads the bilayer. Topologically, residues L124–A130 are periplasmic. Residues L131–I149 traverse the membrane as a helical segment. Over K150–L163 the chain is Cytoplasmic. A helical transmembrane segment spans residues W164–V182. The Periplasmic segment spans residues V183–A185. A helical transmembrane segment spans residues M186–G204. Residues K205–K214 are Cytoplasmic-facing. A helical transmembrane segment spans residues L215–L233. Residues V234–A236 lie on the Periplasmic side of the membrane. The chain crosses the membrane as a helical span at residues L237–T254. The Cytoplasmic segment spans residues A255 to P257. A helical transmembrane segment spans residues L258–G276. Residues F277–L279 lie on the Periplasmic side of the membrane.

The protein belongs to the peptidase A24 family.

It is found in the cell inner membrane. It carries out the reaction Typically cleaves a -Gly-|-Phe- bond to release an N-terminal, basic peptide of 5-8 residues from type IV prepilin, and then N-methylates the new N-terminal amino group, the methyl donor being S-adenosyl-L-methionine.. Its function is as follows. Plays a role in type II pseudopili formation by proteolytically removing the leader sequence from substrate proteins and subsequently monomethylating the alpha-amino group of the newly exposed N-terminal phenylalanine. Substrates include proteins required for biogenesis of the type II general secretory apparatus. This Pectobacterium carotovorum subsp. carotovorum (Erwinia carotovora subsp. carotovora) protein is Prepilin leader peptidase/N-methyltransferase (outO).